We begin with the raw amino-acid sequence, 491 residues long: Ketol-acid reductoisomerase (NADP(+)) (491 aa).

Residues 15 to 208 (AQLGKCRFMG…GGHRAGVLES (194 aa)) enclose the KARI N-terminal Rossmann domain. Residues 45 to 48 (CGAQ), Arg68, Arg76, Ser78, and 108 to 110 (DKQ) contribute to the NADP(+) site. The active site involves His132. Gly158 is a binding site for NADP(+). 2 consecutive KARI C-terminal knotted domains span residues 209–344 (SFVA…TAPQ) and 345–484 (YEGK…MTDM). Mg(2+) contacts are provided by Asp217, Glu221, Glu389, and Glu393. Ser414 contributes to the substrate binding site.

The protein belongs to the ketol-acid reductoisomerase family. Mg(2+) is required as a cofactor.

The enzyme catalyses (2R)-2,3-dihydroxy-3-methylbutanoate + NADP(+) = (2S)-2-acetolactate + NADPH + H(+). It carries out the reaction (2R,3R)-2,3-dihydroxy-3-methylpentanoate + NADP(+) = (S)-2-ethyl-2-hydroxy-3-oxobutanoate + NADPH + H(+). It participates in amino-acid biosynthesis; L-isoleucine biosynthesis; L-isoleucine from 2-oxobutanoate: step 2/4. The protein operates within amino-acid biosynthesis; L-valine biosynthesis; L-valine from pyruvate: step 2/4. Involved in the biosynthesis of branched-chain amino acids (BCAA). Catalyzes an alkyl-migration followed by a ketol-acid reduction of (S)-2-acetolactate (S2AL) to yield (R)-2,3-dihydroxy-isovalerate. In the isomerase reaction, S2AL is rearranged via a Mg-dependent methyl migration to produce 3-hydroxy-3-methyl-2-ketobutyrate (HMKB). In the reductase reaction, this 2-ketoacid undergoes a metal-dependent reduction by NADPH to yield (R)-2,3-dihydroxy-isovalerate. The chain is Ketol-acid reductoisomerase (NADP(+)) from Salmonella arizonae (strain ATCC BAA-731 / CDC346-86 / RSK2980).